Consider the following 276-residue polypeptide: Large ribosomal subunit protein uL2 (276 aa).

A disordered region spans residues 224 to 276; it reads AMNPVDHPLGGGEGKSSGGRHPVTPWGKPTKGYKTRNKKKPSSKLIVKRRGQK. The segment covering 254–276 has biased composition (basic residues); the sequence is KGYKTRNKKKPSSKLIVKRRGQK.

It belongs to the universal ribosomal protein uL2 family. As to quaternary structure, part of the 50S ribosomal subunit. Forms a bridge to the 30S subunit in the 70S ribosome.

In terms of biological role, one of the primary rRNA binding proteins. Required for association of the 30S and 50S subunits to form the 70S ribosome, for tRNA binding and peptide bond formation. It has been suggested to have peptidyltransferase activity; this is somewhat controversial. Makes several contacts with the 16S rRNA in the 70S ribosome. In Solidesulfovibrio magneticus (strain ATCC 700980 / DSM 13731 / RS-1) (Desulfovibrio magneticus), this protein is Large ribosomal subunit protein uL2.